We begin with the raw amino-acid sequence, 690 residues long: Protein arginine N-methyltransferase 7 (690 aa).

SAM-dependent MTase PRMT-type domains are found at residues 14-357 (QNSW…YSLW) and 366-690 (TKSV…QKKL).

It belongs to the class I-like SAM-binding methyltransferase superfamily. Protein arginine N-methyltransferase family. PRMT7 subfamily.

Functionally, essential arginine methyltransferase that can both catalyze the formation of omega-N monomethylarginine (MMA) and symmetrical dimethylarginine (sDMA). Specifically mediates the symmetrical dimethylation of arginine residues in the small nuclear ribonucleoproteins SmD1 and SmD3. In Drosophila yakuba (Fruit fly), this protein is Protein arginine N-methyltransferase 7 (Art7).